A 72-amino-acid chain; its full sequence is DNA-directed RNA polymerase subunit omega (72 aa).

Belongs to the RNA polymerase subunit omega family. The RNAP catalytic core consists of 2 alpha, 1 beta, 1 beta' and 1 omega subunit. When a sigma factor is associated with the core the holoenzyme is formed, which can initiate transcription.

It carries out the reaction RNA(n) + a ribonucleoside 5'-triphosphate = RNA(n+1) + diphosphate. In terms of biological role, promotes RNA polymerase assembly. Latches the N- and C-terminal regions of the beta' subunit thereby facilitating its interaction with the beta and alpha subunits. In Francisella tularensis subsp. holarctica (strain LVS), this protein is DNA-directed RNA polymerase subunit omega.